A 201-amino-acid polypeptide reads, in one-letter code: Small ribosomal subunit protein uS4c (201 aa).

The interval 20-44 (GLTSKRPRAGSDLRNQSRSGKKSQY) is disordered. The region spanning 89-152 (MRLDNTLFRL…NSRTLVQNLL (64 aa)) is the S4 RNA-binding domain.

It belongs to the universal ribosomal protein uS4 family. Part of the 30S ribosomal subunit. Contacts protein S5. The interaction surface between S4 and S5 is involved in control of translational fidelity.

It localises to the plastid. The protein resides in the chloroplast. One of the primary rRNA binding proteins, it binds directly to 16S rRNA where it nucleates assembly of the body of the 30S subunit. Its function is as follows. With S5 and S12 plays an important role in translational accuracy. This Aethionema grandiflorum (Persian stone-cress) protein is Small ribosomal subunit protein uS4c (rps4).